The following is a 338-amino-acid chain: Adenylosuccinate synthetase (338 aa).

GTP is bound by residues 12–18 and 42–44; these read GDEGKGK and GHT. D13 functions as the Proton acceptor in the catalytic mechanism. D13 and G42 together coordinate Mg(2+). IMP is bound by residues 13–16, 40–43, T127, R141, Q179, T194, and R256; these read DEGK and NAGH. The active-site Proton donor is the H43. 252 to 258 lines the substrate pocket; that stretch reads TVTGRRR. GTP contacts are provided by residues R258, 284-286, and 324-326; these read CLD and STG.

Belongs to the adenylosuccinate synthetase family. In terms of assembly, homodimer. The cofactor is Mg(2+).

Its subcellular location is the cytoplasm. It carries out the reaction IMP + L-aspartate + GTP = N(6)-(1,2-dicarboxyethyl)-AMP + GDP + phosphate + 2 H(+). The protein operates within purine metabolism; AMP biosynthesis via de novo pathway; AMP from IMP: step 1/2. Plays an important role in the de novo pathway of purine nucleotide biosynthesis. Catalyzes the first committed step in the biosynthesis of AMP from IMP. This chain is Adenylosuccinate synthetase, found in Methanococcus vannielii (strain ATCC 35089 / DSM 1224 / JCM 13029 / OCM 148 / SB).